Reading from the N-terminus, the 448-residue chain is Phosphoglucosamine mutase (448 aa).

The active-site Phosphoserine intermediate is S99. The Mg(2+) site is built by S99, D238, D240, and D242. At S99 the chain carries Phosphoserine.

This sequence belongs to the phosphohexose mutase family. The cofactor is Mg(2+). Activated by phosphorylation.

The enzyme catalyses alpha-D-glucosamine 1-phosphate = D-glucosamine 6-phosphate. Catalyzes the conversion of glucosamine-6-phosphate to glucosamine-1-phosphate. This chain is Phosphoglucosamine mutase, found in Marinomonas sp. (strain MWYL1).